The following is a 666-amino-acid chain: Magnesium-chelatase 67 kDa subunit (666 aa).

37–44 (GRRGTGKT) is a binding site for ATP. The segment at 327-367 (LPDEEEQMQPPPPPPPPPPPPEPDKPDDPETPPDEAPKDEQ) is disordered. The segment covering 335 to 347 (QPPPPPPPPPPPP) has biased composition (pro residues). In terms of domain architecture, VWFA spans 475-661 (LIIFVVDASG…SLAETVKSGV (187 aa)).

Belongs to the Mg-chelatase subunits D/I family.

It catalyses the reaction protoporphyrin IX + Mg(2+) + ATP + H2O = Mg-protoporphyrin IX + ADP + phosphate + 3 H(+). Its pathway is porphyrin-containing compound metabolism; bacteriochlorophyll biosynthesis. Involved in bacteriochlorophyll biosynthesis; introduces a magnesium ion into protoporphyrin IX to yield Mg-protoporphyrin IX. The polypeptide is Magnesium-chelatase 67 kDa subunit (bchD) (Heliobacterium mobile (Heliobacillus mobilis)).